Here is an 873-residue protein sequence, read N- to C-terminus: Serine/threonine-protein phosphatase 6 regulatory subunit 3 (873 aa).

Disordered regions lie at residues 628–659 (IAFTPESQRRSSSGSTDSEESTDSEEEDGTKQ), 693–715 (AHGTNLDSVGSDVWSTEEPMPAK), 729–755 (LSSTDSLRSNSPVEMETNTEPMDPLSA), 767–787 (PGSVAMEASSDGEEDAENADK), and 840–873 (AEEAPSALQPANSSPEQRTDQRTLLGETSVNGPV). The span at 644-655 (DSEESTDSEEED) shows a compositional bias: acidic residues. The span at 729–739 (LSSTDSLRSNS) shows a compositional bias: low complexity.

The protein belongs to the SAPS family. Protein phosphatase 6 (PP6) holoenzyme is proposed to be a heterotrimeric complex formed by the catalytic subunit, a SAPS domain-containing subunit (PP6R) and an ankyrin repeat-domain containing regulatory subunit (ARS).

Its function is as follows. Regulatory subunit of protein phosphatase 6 (PP6). May function as a scaffolding PP6 subunit. This chain is Serine/threonine-protein phosphatase 6 regulatory subunit 3 (PPP6R3), found in Gallus gallus (Chicken).